We begin with the raw amino-acid sequence, 338 residues long: Putative peptide import ATP-binding protein BMEII0863 (338 aa).

In terms of domain architecture, ABC transporter spans 10–263 (KGLRTVFRTR…PRHPYTMGLL (254 aa)). 43–50 (GESGSGKS) serves as a coordination point for ATP.

Belongs to the ABC transporter superfamily. The complex is composed of two ATP-binding proteins (BMEII0863 and BMEII0864), two transmembrane proteins (BMEII0860 and BMEII0861) and a solute-binding protein (BMEII0859).

The protein localises to the cell inner membrane. In terms of biological role, probably part of an ABC transporter complex that could be involved in peptide import. Probably responsible for energy coupling to the transport system. The polypeptide is Putative peptide import ATP-binding protein BMEII0863 (Brucella melitensis biotype 1 (strain ATCC 23456 / CCUG 17765 / NCTC 10094 / 16M)).